The sequence spans 563 residues: Lipase 2 (563 aa).

An N-terminal signal peptide occupies residues 1 to 19 (MVSKSLFLAAAVNLAGVLA). Position 20 is a pyrrolidone carboxylic acid (Gln-20). An intrachain disulfide couples Cys-80 to Cys-124. Catalysis depends on Ser-236, which acts as the Acyl-ester intermediate. An intrachain disulfide couples Cys-295 to Cys-307. Residue Asn-302 is glycosylated (N-linked (GlcNAc...) asparagine). Glu-373 (charge relay system) is an active-site residue. Asn-383 carries N-linked (GlcNAc...) asparagine glycosylation. His-482 serves as the catalytic Charge relay system.

It belongs to the type-B carboxylesterase/lipase family. In terms of assembly, monomer.

Its subcellular location is the secreted. It carries out the reaction a triacylglycerol + H2O = a diacylglycerol + a fatty acid + H(+). Hydrolyzes all ester bonds in triglyceride and displays a high affinity for triolein. For unsaturated substrates having long fatty acyl chains (C18:2 cis-9, cis-12 and C18:3 cis-9, cis-12, cis-15) GCL I shows higher specific activity than GCL II, whereas GCL II shows higher specific activity against saturated substrates having short fatty acid chains (C8, C10, C12 and C14). The polypeptide is Lipase 2 (LIP2) (Geotrichum candidum (Oospora lactis)).